A 388-amino-acid polypeptide reads, in one-letter code: F-box protein ETP2 (388 aa).

An F-box domain is found at 2–48 (KTIQEQLPNDLVEEILCRVPATSLRRLRSTCKAWNRLFKGDRILASK).

Interacts with EIN2 (via C-terminus).

In terms of biological role, negative regulator of EIN2 protein stability. The polypeptide is F-box protein ETP2 (Arabidopsis thaliana (Mouse-ear cress)).